The sequence spans 228 residues: Histone H1-III (228 aa).

Over residues 1 to 18 (MSDPAPEVASAVPVASPA) the composition is skewed to low complexity. Disordered stretches follow at residues 1 to 44 (MSDP…PPVS) and 98 to 228 (LQTK…AKKA). One can recognise an H15 domain in the interval 39 to 113 (THPPVSEMVV…GASGSFKLPA (75 aa)). A compositionally biased stretch (basic and acidic residues) spans 115 to 133 (AKKEKVAKTPKKAAGEKKP). Basic residues-rich tracts occupy residues 148-170 (SIAK…KSTK) and 178-209 (AAKK…KVAA). Basic and acidic residues predominate over residues 211-221 (KPAEKKPEAAK).

This sequence belongs to the histone H1/H5 family.

It is found in the nucleus. The protein localises to the chromosome. Histones H1 are necessary for the condensation of nucleosome chains into higher-order structures. The polypeptide is Histone H1-III (Glyptotendipes barbipes (Midge)).